Reading from the N-terminus, the 90-residue chain is Probable Fe(2+)-trafficking protein (90 aa).

The protein belongs to the Fe(2+)-trafficking protein family.

Its function is as follows. Could be a mediator in iron transactions between iron acquisition and iron-requiring processes, such as synthesis and/or repair of Fe-S clusters in biosynthetic enzymes. This Pseudomonas entomophila (strain L48) protein is Probable Fe(2+)-trafficking protein.